Here is a 368-residue protein sequence, read N- to C-terminus: 3-dehydroquinate synthase (368 aa).

NAD(+) contacts are provided by residues 109 to 113 (GVIGD), 133 to 134 (TS), lysine 146, lysine 155, and 173 to 176 (TLQT). The Zn(2+) site is built by glutamate 188, histidine 253, and histidine 270.

Belongs to the sugar phosphate cyclases superfamily. Dehydroquinate synthase family. It depends on Co(2+) as a cofactor. Zn(2+) serves as cofactor. The cofactor is NAD(+).

The protein resides in the cytoplasm. The enzyme catalyses 7-phospho-2-dehydro-3-deoxy-D-arabino-heptonate = 3-dehydroquinate + phosphate. The protein operates within metabolic intermediate biosynthesis; chorismate biosynthesis; chorismate from D-erythrose 4-phosphate and phosphoenolpyruvate: step 2/7. Catalyzes the conversion of 3-deoxy-D-arabino-heptulosonate 7-phosphate (DAHP) to dehydroquinate (DHQ). The polypeptide is 3-dehydroquinate synthase (Synechococcus sp. (strain ATCC 27144 / PCC 6301 / SAUG 1402/1) (Anacystis nidulans)).